Consider the following 38-residue polypeptide: Photosystem II reaction center protein L (38 aa).

Residues 17–37 (SLYWGLLLIFVLAVSFSNYFF) traverse the membrane as a helical segment.

It belongs to the PsbL family. As to quaternary structure, PSII is composed of 1 copy each of membrane proteins PsbA, PsbB, PsbC, PsbD, PsbE, PsbF, PsbH, PsbI, PsbJ, PsbK, PsbL, PsbM, PsbT, PsbX, PsbY, PsbZ, Psb30/Ycf12, at least 3 peripheral proteins of the oxygen-evolving complex and a large number of cofactors. It forms dimeric complexes.

Its subcellular location is the plastid. It localises to the chloroplast thylakoid membrane. Functionally, one of the components of the core complex of photosystem II (PSII). PSII is a light-driven water:plastoquinone oxidoreductase that uses light energy to abstract electrons from H(2)O, generating O(2) and a proton gradient subsequently used for ATP formation. It consists of a core antenna complex that captures photons, and an electron transfer chain that converts photonic excitation into a charge separation. This subunit is found at the monomer-monomer interface and is required for correct PSII assembly and/or dimerization. This chain is Photosystem II reaction center protein L, found in Amborella trichopoda.